The following is an 840-amino-acid chain: Homeobox-leucine zipper protein HOX9 (840 aa).

Disordered stretches follow at residues 1–26 and 135–160; these read MAAAVAMRSGSGSDGGGGGYDKAGMD and NPSLGNDTSCESNVTTPQNPLRDASN. Residues 12-21 show a composition bias toward gly residues; it reads GSDGGGGGYD. A DNA-binding region (homeobox) is located at residues 26 to 89; sequence DSGKYVRYTP…NRRCRDKQRK (64 aa). Positions 86 to 135 form a coiled coil; it reads KQRKEASRLQAVNRKLTAMNKLLMEENERLQKQVSQLVHENAYMKQQLQN. Positions 157-385 constitute an START domain; the sequence is DASNPSGLLT…IAQETSGEVV (229 aa).

This sequence belongs to the HD-ZIP homeobox family. Class III subfamily. In terms of tissue distribution, expressed in seedlings, roots, stems, leaf sheaths and blades and panicles.

It localises to the nucleus. In terms of biological role, probable transcription factor. In Oryza sativa subsp. japonica (Rice), this protein is Homeobox-leucine zipper protein HOX9 (HOX9).